Consider the following 269-residue polypeptide: Tungstate-binding protein TupA (269 aa).

The signal sequence occupies residues 1–17 (MKKIISLALALALSASA).

In terms of assembly, the complex is composed of two ATP-binding proteins (TupC), two transmembrane proteins (TupB) and a solute-binding protein (TupA).

It is found in the periplasm. Its function is as follows. Part of an ABC transporter complex involved in ultra-high affinity tungstate uptake. Specifically binds tungstate. The polypeptide is Tungstate-binding protein TupA (Campylobacter jejuni subsp. jejuni serotype O:2 (strain ATCC 700819 / NCTC 11168)).